Consider the following 244-residue polypeptide: MGALGLEGRGGRLQGRGSLLLAVAGATSLVTLLLAVPITVLAVLALVPQDQGGLVTETADPGAQAQQGLGFQKLPEEEPETDLSPGLPAAHLIGAPLKGQGLGWETTKEQAFLTSGTQFSDAEGLALPQDGLYYLYCLVGYRGRAPPGGGDPQGRSVTLRSSLYRAGGAYGPGTPELLLEGAETVTPVLDPARRQGYGPLWYTSVGFGGLVQLRRGERVYVNISHPDMVDFARGKTFFGAVMVG.

The Cytoplasmic portion of the chain corresponds to 1–18; sequence MGALGLEGRGGRLQGRGS. The helical; Signal-anchor for type II membrane protein transmembrane segment at 19 to 48 threads the bilayer; it reads LLLAVAGATSLVTLLLAVPITVLAVLALVP. The Extracellular segment spans residues 49–244; the sequence is QDQGGLVTET…KTFFGAVMVG (196 aa). A THD domain is found at 88-243; the sequence is PAAHLIGAPL…GKTFFGAVMV (156 aa). Asn-222 carries N-linked (GlcNAc...) asparagine glycosylation.

The protein belongs to the tumor necrosis factor family. As to quaternary structure, heterotrimer of either two LTB and one LTA subunits or (less prevalent) one LTB and two LTA subunits. Spleen and thymus.

The protein resides in the membrane. In terms of biological role, cytokine that binds to LTBR/TNFRSF3. May play a specific role in immune response regulation. Provides the membrane anchor for the attachment of the heterotrimeric complex to the cell surface. Isoform 2 is probably non-functional. This chain is Lymphotoxin-beta (LTB), found in Homo sapiens (Human).